The sequence spans 558 residues: Glucose-6-phosphate isomerase (558 aa).

Alanine 2 is modified (N-acetylalanine). Lysine 12 bears the N6-acetyllysine mark. Residue lysine 34 is modified to N6-(2-hydroxyisobutyryl)lysine. Serine 107 bears the Phosphoserine mark. The residue at position 109 (threonine 109) is a Phosphothreonine. The residue at position 142 (lysine 142) is an N6-acetyllysine. Residue 159-160 (GS) participates in D-glucose 6-phosphate binding. Serine 185 bears the Phosphoserine; by CK2 mark. D-glucose 6-phosphate is bound at residue 210 to 215 (SKTFTT). Threonine 250 is subject to Phosphothreonine. D-glucose 6-phosphate contacts are provided by glutamine 354, glutamate 358, and histidine 389. The active-site Proton donor is the glutamate 358. Histidine 389 is an active-site residue. Residue lysine 454 is modified to N6-acetyllysine; alternate. Position 454 is an N6-malonyllysine; alternate (lysine 454). At lysine 454 the chain carries N6-succinyllysine; alternate. A Phosphoserine modification is found at serine 455. Lysine 519 is a D-glucose 6-phosphate binding site. Lysine 519 is a catalytic residue.

It belongs to the GPI family. Homodimer; in the catalytically active form. Monomer in the secreted form. In terms of processing, phosphorylation at Ser-185 by CK2 has been shown to decrease enzymatic activity and may contribute to secretion by a non-classical secretory pathway. ISGylated.

Its subcellular location is the cytoplasm. It localises to the secreted. It catalyses the reaction alpha-D-glucose 6-phosphate = beta-D-fructose 6-phosphate. It participates in carbohydrate degradation; glycolysis; D-glyceraldehyde 3-phosphate and glycerone phosphate from D-glucose: step 2/4. With respect to regulation, strongly inhibited by erythrose 4-phosphate. Its function is as follows. In the cytoplasm, catalyzes the conversion of glucose-6-phosphate to fructose-6-phosphate, the second step in glycolysis, and the reverse reaction during gluconeogenesis. Besides it's role as a glycolytic enzyme, also acts as a secreted cytokine: acts as an angiogenic factor (AMF) that stimulates endothelial cell motility. Acts as a neurotrophic factor, neuroleukin, for spinal and sensory neurons. It is secreted by lectin-stimulated T-cells and induces immunoglobulin secretion. This chain is Glucose-6-phosphate isomerase, found in Homo sapiens (Human).